The primary structure comprises 346 residues: Probable RNA methyltransferase PA1839 (346 aa).

Glutamate 91 acts as the Proton acceptor in catalysis. Positions leucine 94–aspartate 320 constitute a Radical SAM core domain. The cysteines at positions 101 and 325 are disulfide-linked. Residues cysteine 108, cysteine 112, and cysteine 115 each contribute to the [4Fe-4S] cluster site. Residues glycine 153 to glutamate 154, serine 183, serine 206 to histidine 208, and asparagine 282 contribute to the S-adenosyl-L-methionine site. Cysteine 325 serves as the catalytic S-methylcysteine intermediate.

The protein belongs to the radical SAM superfamily. RlmN family. [4Fe-4S] cluster serves as cofactor.

It localises to the cytoplasm. In Pseudomonas aeruginosa (strain ATCC 15692 / DSM 22644 / CIP 104116 / JCM 14847 / LMG 12228 / 1C / PRS 101 / PAO1), this protein is Probable RNA methyltransferase PA1839.